We begin with the raw amino-acid sequence, 299 residues long: ATP phosphoribosyltransferase (299 aa).

The protein belongs to the ATP phosphoribosyltransferase family. Long subfamily. Requires Mg(2+) as cofactor.

The protein localises to the cytoplasm. It catalyses the reaction 1-(5-phospho-beta-D-ribosyl)-ATP + diphosphate = 5-phospho-alpha-D-ribose 1-diphosphate + ATP. It participates in amino-acid biosynthesis; L-histidine biosynthesis; L-histidine from 5-phospho-alpha-D-ribose 1-diphosphate: step 1/9. Its activity is regulated as follows. Feedback inhibited by histidine. Functionally, catalyzes the condensation of ATP and 5-phosphoribose 1-diphosphate to form N'-(5'-phosphoribosyl)-ATP (PR-ATP). Has a crucial role in the pathway because the rate of histidine biosynthesis seems to be controlled primarily by regulation of HisG enzymatic activity. The sequence is that of ATP phosphoribosyltransferase from Shewanella woodyi (strain ATCC 51908 / MS32).